The following is a 395-amino-acid chain: Elongation factor Tu (395 aa).

The tr-type G domain occupies 10-204 (KEHANIGTIG…AVDDFIPTPE (195 aa)). A G1 region spans residues 19-26 (GHVDHGKT). Residue 19-26 (GHVDHGKT) coordinates GTP. Position 26 (Thr26) interacts with Mg(2+). The tract at residues 60–64 (GITIN) is G2. Positions 81 to 84 (DCPG) are G3. GTP-binding positions include 81–85 (DCPGH) and 136–139 (NKVD). Residues 136-139 (NKVD) form a G4 region. Residues 174 to 176 (SAL) are G5.

Belongs to the TRAFAC class translation factor GTPase superfamily. Classic translation factor GTPase family. EF-Tu/EF-1A subfamily. In terms of assembly, monomer.

It localises to the cytoplasm. The enzyme catalyses GTP + H2O = GDP + phosphate + H(+). Its function is as follows. GTP hydrolase that promotes the GTP-dependent binding of aminoacyl-tRNA to the A-site of ribosomes during protein biosynthesis. The protein is Elongation factor Tu of Staphylococcus saprophyticus subsp. saprophyticus (strain ATCC 15305 / DSM 20229 / NCIMB 8711 / NCTC 7292 / S-41).